The chain runs to 219 residues: 2-C-methyl-D-erythritol 4-phosphate cytidylyltransferase (219 aa).

Belongs to the IspD/TarI cytidylyltransferase family. IspD subfamily.

It catalyses the reaction 2-C-methyl-D-erythritol 4-phosphate + CTP + H(+) = 4-CDP-2-C-methyl-D-erythritol + diphosphate. The protein operates within isoprenoid biosynthesis; isopentenyl diphosphate biosynthesis via DXP pathway; isopentenyl diphosphate from 1-deoxy-D-xylulose 5-phosphate: step 2/6. Catalyzes the formation of 4-diphosphocytidyl-2-C-methyl-D-erythritol from CTP and 2-C-methyl-D-erythritol 4-phosphate (MEP). The sequence is that of 2-C-methyl-D-erythritol 4-phosphate cytidylyltransferase from Phocaeicola vulgatus (strain ATCC 8482 / DSM 1447 / JCM 5826 / CCUG 4940 / NBRC 14291 / NCTC 11154) (Bacteroides vulgatus).